Reading from the N-terminus, the 619-residue chain is ESX-2 secretion system protein EccA2 (619 aa).

Residue 373-380 participates in ATP binding; that stretch reads GPPGTGKT.

The protein belongs to the CbxX/CfxQ family. In terms of assembly, part of the ESX-2 / type VII secretion system (T7SS), which is composed of cytosolic and membrane components. Residues 522-619 interact with an artificial EsxB-EsxA heterodimer from the adjacent ESX-1 locus.

It localises to the cytoplasm. Its function is as follows. Shows ATPase activity. Could provide energy for export of ESX-2 substrates. This is ESX-2 secretion system protein EccA2 (eccA2) from Mycobacterium tuberculosis (strain ATCC 25618 / H37Rv).